We begin with the raw amino-acid sequence, 119 residues long: Large ribosomal subunit protein bL20 (119 aa).

This sequence belongs to the bacterial ribosomal protein bL20 family.

Functionally, binds directly to 23S ribosomal RNA and is necessary for the in vitro assembly process of the 50S ribosomal subunit. It is not involved in the protein synthesizing functions of that subunit. The sequence is that of Large ribosomal subunit protein bL20 from Bordetella avium (strain 197N).